The sequence spans 362 residues: Caveolae-associated protein 4 (362 aa).

A disordered region spans residues 1–24; it reads MEHNGSASNAGKIHQNRLSSVTED. Residues 100 to 120 adopt a coiled-coil conformation; it reads IKDVKARVEKQQVRVTKVETK. Residues Ser152, Ser171, and Ser172 each carry the phosphoserine modification. Residues 227-255 are compositionally biased toward basic and acidic residues; that stretch reads PERRERLRQSGERLRQSGERLRQSGERFK. A disordered region spans residues 227-261; sequence PERRERLRQSGERLRQSGERLRQSGERFKKSISNA. Tyr324 carries the post-translational modification Phosphotyrosine. Thr334 is modified (phosphothreonine). At Ser353 the chain carries Phosphoserine.

It belongs to the CAVIN family. In terms of assembly, component of the CAVIN complex composed of CAVIN1, CAVIN2, CAVIN3 and CAVIN4. Interacts with CAVIN1, CAV3, ADRA1A and ADRA1B. Interacts with CAVIN2; this augments the transactivation of NPPA. Interacts with MAPK1 and MAPK3. As to expression, expressed at much higher levels in cardiomyocytes than in non-cardiomyocytes.

The protein resides in the cytoplasm. Its subcellular location is the myofibril. The protein localises to the sarcomere. It is found in the cytosol. It localises to the cell membrane. The protein resides in the sarcolemma. Its subcellular location is the membrane. The protein localises to the caveola. Functionally, modulates the morphology of formed caveolae in cardiomyocytes, but is not required for caveolar formation. Facilitates the recruitment of MAPK1/3 to caveolae within cardiomyocytes and regulates alpha-1 adrenergic receptor-induced hypertrophic responses in cardiomyocytes through MAPK1/3 activation. Contributes to proper membrane localization and stabilization of caveolin-3 (CAV3) in cardiomyocytes. Induces RHOA activation and activates NPPA transcription and myofibrillar organization through the Rho/ROCK signaling pathway. The sequence is that of Caveolae-associated protein 4 from Rattus norvegicus (Rat).